The following is a 1549-amino-acid chain: MALFRALYIIWVFLLIPLSNAEEFTPKVTRTLSRYVFDIVNFDDSNTLIRAEEDSVEISFDAGENWKTIDEIEEPIESFVVDPFRGHDRAFAFVKTAPKFYVTDDQGKSWRPLTIPISEKASNYFCDVTTHPIKKKHLIIRCDLLTIKNSGLMYVGREIYTTNDGVSFSQVKPSFGKIDGHISTARCDFIKSSEDSDLGGNDASILCLFRNTEYIESTGSTIDKSELILSADGGETFKELVQFKDKVVSRYEILKHHVIVLTQDDMYNEMSSTNIWISNDVSTFQVARTPTKIRHVNMGQIHEDSIGRIVLPVSRERDDEDSNQPGAAEVLISDSEGLKFLPINWIPNNQFGYINVAYPGFLKGTFFGSFHPFIEYSDRKRKYSRQKVREETKVSVDNGLTWTNLKVVDRENVDLFGCDVTKPERCSLQTHFYDLRNLNPSAGIMMISGIVGDGSAYNWKEEKTFISRDSGLTWRLVHNSTGLYTTGDLGNIIMYIPYRSNENGDVPSKFYYSLDQGKTWGEYDLIMPIYPYRLVSTISDGSGSKFILTGTSITEDPIFITYSIDFSAVFDYKSCEEGDFEDWNLADGKCVNGAKYKYRRRKQDAQCLVKKAFKDLSLDETPCNSCTGSDYECSFEFVRDAKGDCIPDYNLIALSDICDKSKGKSVLVKPLQLIKGDKCKTPMKIESVDIPCDEIPKEGSSDKEIVTTENKFDFEIKFYQYFDTVADESLVMLNSIGDAYISHDGGQTIKRFDTDGEKIVEIVFNPYFNSSAYLFGSKGNIFLTHDRGYSFMIAKLPEARQLGMPLDFSAKAQDTFIYYGGKNCESILSPECHAVAYLTKDGGETFTEMLDNAIHCEFAGTLFKYPSNDDMVMCQVKEKFSQTRSLVSSTDFFQDDRKTVFENIIGYLSTGGYIIVAVPHEDNELRAYVTNDGAEFTEAKFPYDEDIGKQDAFTILGSEEGSIFLHLATNLESGHDFGNLLKSNSNGTSFVTLEHAVNRNTFGYVDFEKVQGLEGIIITNIVSNSEKVGENKEDEQLKTKITFNDGSDWNFLKPPKKDSEGKKFPCDSVSLDKCSLHLHGYTERKDIRDTYSSGSALGMMFGVGNVGDRLLPYEECSTFLTTDGGETWTEVKKGPHQWEYGDHGGVLVLVPENAETDSISYSTDFGKTWKDYKFCGDKVLVKDIITVPRDSALRFLLFGEAKNMGSGSFRTYTIDFRNIFERQCEFDITGRKRADFKYSPLGSRTGCLFGHKTEFLRKTDEKCFIGNIPLSEFSRNVKNCPCTRQDFECDYNFYKASDGTCKLVKGLSSANGADICKKEPDLIEYYDSSGYRKIPLSTCKGGLKLDAHLAPHPCPGKEKAFREKYSINTGAYALVFVTILLVIFFVAWFVYDRGIRRNGGFSRFEEIRLGDDGLIENNRTDRVVNIIVRLGLCISLITKSAFQRAKAGTAQLSSKFRARFGNKKGATYSSLLHDQLSDEPDGFHEDSNDLSSFRGQGSNSEIEQEDVDTSQQEHTLRTDLLGASNIPDALPARSASHESDLAAARSEDK.

Positions 1-21 (MALFRALYIIWVFLLIPLSNA) are cleaved as a signal peptide. The Lumenal segment spans residues 22-1369 (EEFTPKVTRT…AFREKYSINT (1348 aa)). BNR repeat units follow at residues 57–68 (EISFDAGENWKT), 101–112 (YVTDDQGKSWRP), 159–170 (IYTTNDGVSFSQ), 228–239 (ILSADGGETFKE), 393–404 (KVSVDNGLTWTN), and 465–476 (FISRDSGLTWRL). Asparagine 479 is a glycosylation site (N-linked (GlcNAc...) asparagine). BNR repeat units lie at residues 511 to 522 (YYSLDQGKTWGE) and 740 to 751 (YISHDGGQTIKR). Residue asparagine 769 is glycosylated (N-linked (GlcNAc...) asparagine). One copy of the BNR 9 repeat lies at 837 to 848 (YLTKDGGETFTE). The N-linked (GlcNAc...) asparagine glycan is linked to asparagine 986. BNR repeat units follow at residues 1040 to 1051 (KITFNDGSDWNF), 1119 to 1130 (FLTTDGGETWTE), and 1160 to 1171 (SYSTDFGKTWKD). A helical membrane pass occupies residues 1370–1390 (GAYALVFVTILLVIFFVAWFV). The Cytoplasmic portion of the chain corresponds to 1391-1549 (YDRGIRRNGG…DLAAARSEDK (159 aa)). The interval 1479–1549 (EPDGFHEDSN…DLAAARSEDK (71 aa)) is disordered. Over residues 1489–1501 (DLSSFRGQGSNSE) the composition is skewed to polar residues. Residues 1535 to 1549 (ASHESDLAAARSEDK) are compositionally biased toward basic and acidic residues.

It belongs to the VPS10-related sortilin family.

The protein localises to the golgi apparatus. Its subcellular location is the trans-Golgi network membrane. It is found in the endosome membrane. Functions as a sorting receptor in the Golgi compartment required for the intracellular sorting and delivery of soluble vacuolar proteins, like carboxypeptidase Y (CPY) and proteinase A. This Saccharomyces cerevisiae (strain ATCC 204508 / S288c) (Baker's yeast) protein is VPS10 homolog 1 (VTH1).